Reading from the N-terminus, the 560-residue chain is uncharacterized protein (560 aa).

Topologically, residues 1 to 17 are cytoplasmic; it reads MEPKRKSGSLAKHDLPQ. A helical transmembrane segment spans residues 18–38; sequence FYLLIMLYLAQGIPVGLAFGT. Residues 39–54 are Extracellular-facing; sequence VPFLLKSLAKETSFTS. The chain crosses the membrane as a helical span at residues 55–75; the sequence is LGIFSMATYPYSLKIIWSPIV. At 76 to 88 the chain is on the cytoplasmic side; the sequence is DSLYNKRIGRRRS. The helical transmembrane segment at 89 to 109 threads the bilayer; the sequence is WIIPVQFVSGFVLWALGWCIS. At 110–139 the chain is on the extracellular side; that stretch reads QGIIFDGVDDAFHNRGNGTLHSVSIKNLTW. The chain crosses the membrane as a helical span at residues 140 to 160; it reads WFGLLVFLCATQDIAVDGWAL. The Cytoplasmic portion of the chain corresponds to 161 to 172; sequence TILSKESLSYAS. A helical membrane pass occupies residues 173 to 193; it reads TAQTIGLNIGYFMSFTIFLSL. Residues 194-214 lie on the Extracellular side of the membrane; the sequence is NSSDFANKYFRNIPLDHGFIS. Residues 215-235 form a helical membrane-spanning segment; sequence LGGYMKFSGMLYIVITIYIIF. Over 236-329 the chain is Cytoplasmic; it reads CTKEKPYVEY…KLLEQGFKRE (94 aa). Residues 330–350 traverse the membrane as a helical segment; it reads DLAVTVLIDLPFEIIFGYYVV. The Extracellular segment spans residues 351 to 374; it reads KWSSDKDPMIRDNRRLRNSTGTNK. Residues 375–395 form a helical membrane-spanning segment; the sequence is VIKFLVGDAGVLTPWLWGFLG. At 396-421 the chain is on the cytoplasmic side; the sequence is RLAAAVLGSYVVKQFPKDGEISTGYF. The helical transmembrane segment at 422-442 threads the bilayer; it reads CLVIFQHLLGSFMNTVQFIGI. Residues 443-521 are Extracellular-facing; that stretch reads SAFHTRVADP…LNGTVTILRD (79 aa). Residues 522 to 542 form a helical membrane-spanning segment; the sequence is GYYITNLICIVVGLFLYFGYL. Over 543–560 the chain is Cytoplasmic; sequence KRKILHLQSLPISSWRCT.

It is found in the membrane. This is an uncharacterized protein from Saccharomyces cerevisiae (strain ATCC 204508 / S288c) (Baker's yeast).